The following is a 150-amino-acid chain: Transcription antitermination protein NusB (150 aa).

This sequence belongs to the NusB family.

Functionally, involved in transcription antitermination. Required for transcription of ribosomal RNA (rRNA) genes. Binds specifically to the boxA antiterminator sequence of the ribosomal RNA (rrn) operons. In Chloroflexus aggregans (strain MD-66 / DSM 9485), this protein is Transcription antitermination protein NusB.